The chain runs to 300 residues: Large ribosomal subunit protein uL18 (300 aa).

Basic and acidic residues predominate over residues 246-267; the sequence is NIRSDPKRDRKPKKDVSKEPKR. The segment at 246–276 is disordered; the sequence is NIRSDPKRDRKPKKDVSKEPKRWNAKKLTNA.

This sequence belongs to the universal ribosomal protein uL18 family. Component of the large ribosomal subunit (LSU).

The protein resides in the cytoplasm. The protein localises to the nucleus. In terms of biological role, component of the ribosome, a large ribonucleoprotein complex responsible for the synthesis of proteins in the cell. The small ribosomal subunit (SSU) binds messenger RNAs (mRNAs) and translates the encoded message by selecting cognate aminoacyl-transfer RNA (tRNA) molecules. The large subunit (LSU) contains the ribosomal catalytic site termed the peptidyl transferase center (PTC), which catalyzes the formation of peptide bonds, thereby polymerizing the amino acids delivered by tRNAs into a polypeptide chain. The nascent polypeptides leave the ribosome through a tunnel in the LSU and interact with protein factors that function in enzymatic processing, targeting, and the membrane insertion of nascent chains at the exit of the ribosomal tunnel. The sequence is that of Large ribosomal subunit protein uL18 (RpL5) from Toxoptera citricida (Brown citrus aphid).